A 460-amino-acid polypeptide reads, in one-letter code: V-type ATP synthase beta chain (460 aa).

This sequence belongs to the ATPase alpha/beta chains family.

Its function is as follows. Produces ATP from ADP in the presence of a proton gradient across the membrane. The V-type beta chain is a regulatory subunit. The polypeptide is V-type ATP synthase beta chain (Clostridium perfringens (strain ATCC 13124 / DSM 756 / JCM 1290 / NCIMB 6125 / NCTC 8237 / Type A)).